Here is a 468-residue protein sequence, read N- to C-terminus: ERO1-like protein alpha (468 aa).

The N-terminal stretch at 1–23 (MGRRWGFLIGFLVAVGLLGLGHG) is a signal peptide. 8 disulfides stabilise this stretch: C35-C48, C37-C46, C85-C391, C94-C99, C94-C131, C99-C104, C208-C241, and C394-C397. 3 positions are modified to phosphoserine: S106, S143, and S145. Residues R187, T189, and W200 each contribute to the FAD site. Residues S252 and H255 each coordinate FAD. N280 carries N-linked (GlcNAc...) asparagine glycosylation. FAD is bound by residues R287 and R300. N-linked (GlcNAc...) asparagine glycosylation occurs at N384.

The protein belongs to the EROs family. In terms of assembly, predominantly monomer. May function both as a monomer and a homodimer. Interacts with PDILT. Interacts with ERP44; the interaction results in retention of ERO1A in the endoplasmic reticulum. It depends on FAD as a cofactor. In terms of processing, the Cys-94/Cys-99 and Cys-394/Cys-397 disulfide bonds constitute the redox-active center. The Cys-94/Cys-99 disulfide bond may accept electron from P4HB and funnel them to the active site disulfide Cys-394/Cys-397. The regulatory Cys-99/Cys-104 disulfide bond stabilizes the other regulatory bond Cys-94/Cys-131. Post-translationally, phosphorylated on Ser-145 by FAM20C in the Golgi which increases its enzymatic activity. Phosphorylation is induced by lactation. It is also induced by hypoxia and reductive stress.

The protein resides in the endoplasmic reticulum membrane. It localises to the golgi apparatus lumen. It is found in the secreted. The protein localises to the cell projection. Its subcellular location is the dendrite. With respect to regulation, enzyme activity is tightly regulated to prevent the accumulation of reactive oxygen species in the endoplasmic reticulum. Reversibly down-regulated by the formation of disulfide bonds between the active site Cys-94 and Cys-131, and between Cys-99 and Cys-104. Glutathione may be required to regulate its activity in the endoplasmic reticulum. In terms of biological role, oxidoreductase involved in disulfide bond formation in the endoplasmic reticulum. Efficiently reoxidizes P4HB/PDI, the enzyme catalyzing protein disulfide formation, in order to allow P4HB to sustain additional rounds of disulfide formation. Following P4HB reoxidation, passes its electrons to molecular oxygen via FAD, leading to the production of reactive oxygen species (ROS) in the cell. Required for the proper folding of immunoglobulins. Plays an important role in ER stress-induced, CHOP-dependent apoptosis by activating the inositol 1,4,5-trisphosphate receptor IP3R1. The sequence is that of ERO1-like protein alpha from Bos taurus (Bovine).